Reading from the N-terminus, the 278-residue chain is HTH-type transcriptional activator RhaS (278 aa).

An HTH araC/xylS-type domain is found at 174–272 (NLLLAWLEDH…NWSPRDIRQG (99 aa)). DNA-binding regions (H-T-H motif) lie at residues 191-212 (DAVADQFSLSLRTLHRQLKQQT) and 239-262 (VTDIAYRCGFSDSNHFSTLFRREF).

In terms of assembly, binds DNA as a dimer.

The protein resides in the cytoplasm. Activates expression of the rhaBAD and rhaT operons. The chain is HTH-type transcriptional activator RhaS from Escherichia coli O6:H1 (strain CFT073 / ATCC 700928 / UPEC).